The chain runs to 264 residues: MKKMTINDLIKWKQEGRKFATSTAYDASFAQLFESQEMPVLLVGDSLGMVLQGENDTLPVTVDDIVYHTRCVRAGSPNCLLMADMPFMSYATPEQACENAAKLMRAGANMVKIEGGDWLVDTVKMLTERAVPVCAHLGLTPQSVNIFGGYKIQGRDQEKADRMVKDALALQEAGAQIVLLECVPAELAERITKVLDVPVIGIGAGNVTDGQILVMHDMFGISANYMPKFSKNFLAETGDMRKAVAKYIEDVANGVFPDDAHTIA.

Mg(2+) contacts are provided by Asp-45 and Asp-84. Residues 45–46 (DS), Asp-84, and Lys-112 contribute to the 3-methyl-2-oxobutanoate site. Glu-114 lines the Mg(2+) pocket. Residue Glu-181 is the Proton acceptor of the active site.

Belongs to the PanB family. As to quaternary structure, homodecamer; pentamer of dimers. Requires Mg(2+) as cofactor.

Its subcellular location is the cytoplasm. It catalyses the reaction 3-methyl-2-oxobutanoate + (6R)-5,10-methylene-5,6,7,8-tetrahydrofolate + H2O = 2-dehydropantoate + (6S)-5,6,7,8-tetrahydrofolate. It functions in the pathway cofactor biosynthesis; (R)-pantothenate biosynthesis; (R)-pantoate from 3-methyl-2-oxobutanoate: step 1/2. In terms of biological role, catalyzes the reversible reaction in which hydroxymethyl group from 5,10-methylenetetrahydrofolate is transferred onto alpha-ketoisovalerate to form ketopantoate. This chain is 3-methyl-2-oxobutanoate hydroxymethyltransferase, found in Vibrio parahaemolyticus serotype O3:K6 (strain RIMD 2210633).